Reading from the N-terminus, the 464-residue chain is ATP synthase subunit beta (464 aa).

An ATP-binding site is contributed by 153–160 (GGAGVGKT).

This sequence belongs to the ATPase alpha/beta chains family. In terms of assembly, F-type ATPases have 2 components, CF(1) - the catalytic core - and CF(0) - the membrane proton channel. CF(1) has five subunits: alpha(3), beta(3), gamma(1), delta(1), epsilon(1). CF(0) has three main subunits: a(1), b(2) and c(9-12). The alpha and beta chains form an alternating ring which encloses part of the gamma chain. CF(1) is attached to CF(0) by a central stalk formed by the gamma and epsilon chains, while a peripheral stalk is formed by the delta and b chains.

The protein localises to the cell membrane. It catalyses the reaction ATP + H2O + 4 H(+)(in) = ADP + phosphate + 5 H(+)(out). Its function is as follows. Produces ATP from ADP in the presence of a proton gradient across the membrane. The catalytic sites are hosted primarily by the beta subunits. The protein is ATP synthase subunit beta of Alkaliphilus oremlandii (strain OhILAs) (Clostridium oremlandii (strain OhILAs)).